Reading from the N-terminus, the 209-residue chain is Na(+)-translocating NADH-quinone reductase subunit D (209 aa).

The next 5 helical transmembrane spans lie at 42–62 (LVMT…ISLI), 66–86 (IPGS…VIVV), 103–123 (VFVG…AYAM), 131–151 (FMDG…VGFL), and 178–198 (NGLF…IWGL).

This sequence belongs to the NqrDE/RnfAE family. As to quaternary structure, composed of six subunits; NqrA, NqrB, NqrC, NqrD, NqrE and NqrF.

The protein localises to the cell inner membrane. The catalysed reaction is a ubiquinone + n Na(+)(in) + NADH + H(+) = a ubiquinol + n Na(+)(out) + NAD(+). Its function is as follows. NQR complex catalyzes the reduction of ubiquinone-1 to ubiquinol by two successive reactions, coupled with the transport of Na(+) ions from the cytoplasm to the periplasm. NqrA to NqrE are probably involved in the second step, the conversion of ubisemiquinone to ubiquinol. In Proteus mirabilis (strain HI4320), this protein is Na(+)-translocating NADH-quinone reductase subunit D.